The following is a 180-amino-acid chain: Large ribosomal subunit protein uL6 (180 aa).

The protein belongs to the universal ribosomal protein uL6 family. As to quaternary structure, part of the 50S ribosomal subunit.

Functionally, this protein binds to the 23S rRNA, and is important in its secondary structure. It is located near the subunit interface in the base of the L7/L12 stalk, and near the tRNA binding site of the peptidyltransferase center. This Mesoplasma florum (strain ATCC 33453 / NBRC 100688 / NCTC 11704 / L1) (Acholeplasma florum) protein is Large ribosomal subunit protein uL6.